The sequence spans 450 residues: Phosphoglucosamine mutase (450 aa).

S101 acts as the Phosphoserine intermediate in catalysis. S101, D240, D242, and D244 together coordinate Mg(2+). Residue S101 is modified to Phosphoserine.

It belongs to the phosphohexose mutase family. It depends on Mg(2+) as a cofactor. In terms of processing, activated by phosphorylation.

It carries out the reaction alpha-D-glucosamine 1-phosphate = D-glucosamine 6-phosphate. Catalyzes the conversion of glucosamine-6-phosphate to glucosamine-1-phosphate. The chain is Phosphoglucosamine mutase from Streptococcus thermophilus (strain ATCC BAA-250 / LMG 18311).